Consider the following 388-residue polypeptide: Chaperone protein DnaJ 1 (388 aa).

The region spanning Asp10–Arg74 is the J domain. The segment at Gly159 to Thr237 adopts a CR-type zinc-finger fold. Zn(2+) is bound by residues Cys172, Cys175, Cys189, Cys192, Cys211, Cys214, Cys225, and Cys228. CXXCXGXG motif repeat units follow at residues Cys172–Gly179, Cys189–Gly196, Cys211–Gly218, and Cys225–Gly232.

The protein belongs to the DnaJ family. As to quaternary structure, homodimer. The cofactor is Zn(2+).

It is found in the cytoplasm. In terms of biological role, participates actively in the response to hyperosmotic and heat shock by preventing the aggregation of stress-denatured proteins and by disaggregating proteins, also in an autonomous, DnaK-independent fashion. Unfolded proteins bind initially to DnaJ; upon interaction with the DnaJ-bound protein, DnaK hydrolyzes its bound ATP, resulting in the formation of a stable complex. GrpE releases ADP from DnaK; ATP binding to DnaK triggers the release of the substrate protein, thus completing the reaction cycle. Several rounds of ATP-dependent interactions between DnaJ, DnaK and GrpE are required for fully efficient folding. Also involved, together with DnaK and GrpE, in the DNA replication of plasmids through activation of initiation proteins. In Mycobacterium leprae (strain TN), this protein is Chaperone protein DnaJ 1.